A 141-amino-acid chain; its full sequence is Nucleoside diphosphate kinase (141 aa).

The ATP site is built by K11, F59, R87, T93, R104, and N114. Residue H117 is the Pros-phosphohistidine intermediate of the active site.

This sequence belongs to the NDK family. As to quaternary structure, homotetramer. It depends on Mg(2+) as a cofactor.

Its subcellular location is the cytoplasm. The catalysed reaction is a 2'-deoxyribonucleoside 5'-diphosphate + ATP = a 2'-deoxyribonucleoside 5'-triphosphate + ADP. It carries out the reaction a ribonucleoside 5'-diphosphate + ATP = a ribonucleoside 5'-triphosphate + ADP. Major role in the synthesis of nucleoside triphosphates other than ATP. The ATP gamma phosphate is transferred to the NDP beta phosphate via a ping-pong mechanism, using a phosphorylated active-site intermediate. This Yersinia enterocolitica serotype O:8 / biotype 1B (strain NCTC 13174 / 8081) protein is Nucleoside diphosphate kinase.